Consider the following 223-residue polypeptide: PRA1 family protein B5 (223 aa).

Helical transmembrane passes span 83 to 103 (SSYFRVNYVCIVALILGFSLL), 105 to 125 (HPFSLILLLCLAASWLFLYLF), 146 to 166 (GGLILSTIAVIFFTSVGSVLI), 170 to 190 (MIGIATICVHGAFRAPDDLFL), and 196 to 216 (AASGFLSFIGVPAIPSVAPSA).

It belongs to the PRA1 family. In terms of assembly, interacts with PRA1B1, PRA1B2, PRA1B3, PRA1B4, PRA1B6 and PRA1E. As to expression, expressed in roots, lateral roots, lateral root caps, columella cells, leaves, and shoot apex.

It localises to the endosome membrane. Functionally, may be involved in both secretory and endocytic intracellular trafficking in the endosomal/prevacuolar compartments. The chain is PRA1 family protein B5 (PRA1B5) from Arabidopsis thaliana (Mouse-ear cress).